Consider the following 397-residue polypeptide: Lysophospholipid transporter LplT (397 aa).

At 1 to 17 the chain is on the periplasmic side; that stretch reads MSESVHTNTSLWSKGMK. Residues 18–38 traverse the membrane as a helical segment; that stretch reads AVIVAQFLSAFGDNALLFATL. Topologically, residues 39-52 are cytoplasmic; the sequence is ALLKAQFYPEWSQP. Residues 53 to 73 traverse the membrane as a helical segment; that stretch reads ILQMVFVGAYILFAPFVGQVA. At 74-90 the chain is on the periplasmic side; it reads DSFAKGRVMMFANGLKL. Residues 91–111 form a helical membrane-spanning segment; that stretch reads LGAASICFGINPFLGYTLVGV. Over 112–144 the chain is Cytoplasmic; sequence GAAAYSPAKYGILGELTTGSKLVKANGLMEAST. Residues 145–165 form a helical membrane-spanning segment; it reads IAAILLGSVAGGVLADWHVLV. Ala-166 is a topological domain (periplasmic). Residues 167–187 form a helical membrane-spanning segment; that stretch reads LAACALAYGGAVVANIYIPKL. The Cytoplasmic portion of the chain corresponds to 188 to 226; sequence AAARPGQSWNLINMTRSFLNACTSLWRNGETRFSLVGTS. A helical transmembrane segment spans residues 227–247; it reads LFWGAGVTLRFLLVLWVPVAL. Topologically, residues 248–256 are periplasmic; it reads GITDNATPT. The chain crosses the membrane as a helical span at residues 257-277; sequence YLNAMVAIGIVVGAGAAAKLV. The Cytoplasmic portion of the chain corresponds to 278–280; sequence TLE. The chain crosses the membrane as a helical span at residues 281 to 301; that stretch reads TVSRCMPAGILIGVVVLIFSL. Topologically, residues 302-304 are periplasmic; sequence QHE. The chain crosses the membrane as a helical span at residues 305-325; sequence LLPAYALLMLIGVMGGFFVVP. The Cytoplasmic portion of the chain corresponds to 326–343; sequence LNALLQERGKKSVGAGNA. The helical transmembrane segment at 344-364 threads the bilayer; that stretch reads IAVQNLGENSAMLLMLGIYSL. Over 365 to 366 the chain is Periplasmic; sequence AV. A helical membrane pass occupies residues 367 to 387; the sequence is MIGIPVVPIGIGFGALFALAI. The Cytoplasmic portion of the chain corresponds to 388 to 397; that stretch reads TALWIWQRRH.

It belongs to the major facilitator superfamily. LplT (TC 2.A.1.42) family.

The protein localises to the cell inner membrane. Its function is as follows. Catalyzes the facilitated diffusion of 2-acyl-glycero-3-phosphoethanolamine (2-acyl-GPE) into the cell. The polypeptide is Lysophospholipid transporter LplT (Escherichia coli O8 (strain IAI1)).